The following is a 426-amino-acid chain: Endoglucanase Z (426 aa).

Residues M1–A43 form the signal peptide. The segment at S44–Y332 is catalytic. E176 acts as the Proton donor in catalysis. Residue E263 is the Nucleophile of the active site. The interval K333–A366 is linker. A disordered region spans residues S336–D367. The segment at D367 to N426 is cellulose-binding. C368 and C425 are oxidised to a cystine.

This sequence belongs to the glycosyl hydrolase 5 (cellulase A) family.

Its subcellular location is the secreted. It carries out the reaction Endohydrolysis of (1-&gt;4)-beta-D-glucosidic linkages in cellulose, lichenin and cereal beta-D-glucans.. Its function is as follows. Represents 97% of the global cellulase activity. This Dickeya dadantii (strain 3937) (Erwinia chrysanthemi (strain 3937)) protein is Endoglucanase Z (celZ).